The chain runs to 198 residues: Holliday junction branch migration complex subunit RuvA (198 aa).

The tract at residues 1–63 is domain I; the sequence is MYDYIKGQLT…EDAQLLFGFH (63 aa). A domain II region spans residues 64–142; the sequence is SEEEKDVFLK…EAPKEESSKL (79 aa). Positions 143–147 are flexible linker; it reads PKAKH. A domain III region spans residues 148 to 198; that stretch reads QENEQLDEAIEALLALGYKATELKKIRAFFEGTSETAEQYIKSALKMLMKG.

Belongs to the RuvA family. In terms of assembly, homotetramer. Forms an RuvA(8)-RuvB(12)-Holliday junction (HJ) complex. HJ DNA is sandwiched between 2 RuvA tetramers; dsDNA enters through RuvA and exits via RuvB. An RuvB hexamer assembles on each DNA strand where it exits the tetramer. Each RuvB hexamer is contacted by two RuvA subunits (via domain III) on 2 adjacent RuvB subunits; this complex drives branch migration. In the full resolvosome a probable DNA-RuvA(4)-RuvB(12)-RuvC(2) complex forms which resolves the HJ.

It localises to the cytoplasm. Its function is as follows. The RuvA-RuvB-RuvC complex processes Holliday junction (HJ) DNA during genetic recombination and DNA repair, while the RuvA-RuvB complex plays an important role in the rescue of blocked DNA replication forks via replication fork reversal (RFR). RuvA specifically binds to HJ cruciform DNA, conferring on it an open structure. The RuvB hexamer acts as an ATP-dependent pump, pulling dsDNA into and through the RuvAB complex. HJ branch migration allows RuvC to scan DNA until it finds its consensus sequence, where it cleaves and resolves the cruciform DNA. The protein is Holliday junction branch migration complex subunit RuvA of Streptococcus equi subsp. zooepidemicus (strain MGCS10565).